We begin with the raw amino-acid sequence, 299 residues long: MGDKNKDDSSSQSKAVRKEKRAFLFRKWTRVDVMRVSAVGAVHLLCLLAPFNYTWEAFRFAAMVGISTNLSITFSYHRNLTHRSFKLPKWLEYPFAYSALFALQGHPIDWVSTHRFHHQFTDSDRDPHSPIEGFWFSHVFWIFDTSYIREKCGGRDNVMDLKQQWFYRFLQNTIGLHILTFWILVYLWGGLPYLTWSVGVGGAIGYHATWLINSACHIWGSRAWNTKDTSRNIWWLGPFTMGESWHNNHHAFEASARHGLEWYQVDLTWYLIWFFQVLGLATDVKLPTDAQKRKMSLAR.

The next 2 helical transmembrane spans lie at 38–57 (AVGA…TWEA) and 58–76 (FRFA…TFSY). Residues 77–82 (HRNLTH) carry the Histidine box-1 motif. Positions 114–118 (HRFHH) match the Histidine box-2 motif. A run of 2 helical transmembrane segments spans residues 174–194 (IGLH…LPYL) and 198–218 (VGVG…ACHI). The short motif at 246–250 (HNNHH) is the Histidine box-3 element. The helical transmembrane segment at 262 to 282 (WYQVDLTWYLIWFFQVLGLAT) threads the bilayer.

It belongs to the fatty acid desaturase type 1 family. Fe cation serves as cofactor.

It localises to the endoplasmic reticulum membrane. It participates in lipid metabolism; polyunsaturated fatty acid biosynthesis. The sequence is that of Delta-9 desaturase-like 3 protein from Arabidopsis thaliana (Mouse-ear cress).